The primary structure comprises 515 residues: ATP synthase subunit alpha (515 aa).

171 to 178 provides a ligand contact to ATP; it reads GDRQTGKT.

Belongs to the ATPase alpha/beta chains family. As to quaternary structure, F-type ATPases have 2 components, CF(1) - the catalytic core - and CF(0) - the membrane proton channel. CF(1) has five subunits: alpha(3), beta(3), gamma(1), delta(1), epsilon(1). CF(0) has three main subunits: a(1), b(2) and c(9-12). The alpha and beta chains form an alternating ring which encloses part of the gamma chain. CF(1) is attached to CF(0) by a central stalk formed by the gamma and epsilon chains, while a peripheral stalk is formed by the delta and b chains.

Its subcellular location is the cell inner membrane. It catalyses the reaction ATP + H2O + 4 H(+)(in) = ADP + phosphate + 5 H(+)(out). Produces ATP from ADP in the presence of a proton gradient across the membrane. The alpha chain is a regulatory subunit. This chain is ATP synthase subunit alpha, found in Xylella fastidiosa (strain M12).